A 466-amino-acid polypeptide reads, in one-letter code: MMSPNGSLKFASQAVAKPYFVFALILFVGQILFGLIMGLQYVVGDFLFPAIPFNVARMVHTNLLIVWLLFGFMGAAYYLVPEESDCELYSPKLAWILFWVFAAAGVLTILGYLLVPYAGLARLTGNELWPTMGREFLEQPTISKAGIVIVALGFLFNVGMTVLRGRKTAISMVLMTGLIGLALLFLFSFYNPENLTRDKFYWWWVVHLWVEGVWELIMGAILAFVLVKITGVDREVIEKWLYVIIAMALISGIIGTGHHYFWIGVPGYWLWLGSVFSALEPLPFFAMVLFAFNTINRRRRRDYPNRAVALWAMGTTVMAFLGAGVWGFMHTLAPVNYYTHGTQLTAAHGHMAFYGAYAMIVMTIISYAMPRLRGIGEAMDNRSQVLEMWGFWLMTVAMVFITLFLSAAGVLQVWLQRMPADGAAMTFMATQDQLAIFYWLREGAGVVFLIGLVAYLLSFRRGKAAA.

The helical transmembrane segment at 19 to 39 (YFVFALILFVGQILFGLIMGL) threads the bilayer. Histidine 60 lines the heme b pocket. Helical transmembrane passes span 61–81 (TNLL…YLVP), 95–115 (WILF…YLLV), 142–162 (ISKA…GMTV), 169–189 (AISM…LFSF), 205–225 (VVHL…LAFV), 243–263 (VIIA…YFWI), 270–290 (LWLG…MVLF), and 308–328 (VALW…VWGF). Positions 207, 258, and 259 each coordinate Fe cation. Heme b is bound by residues histidine 348 and histidine 350. Transmembrane regions (helical) follow at residues 349 to 369 (GHMA…SYAM), 391 to 411 (FWLM…AGVL), and 434 to 454 (LAIF…GLVA).

Belongs to the heme-copper respiratory oxidase family. Heterodimer of cytochromes b (large subunit) and c (small subunit).

It is found in the cell membrane. It catalyses the reaction nitrous oxide + 2 Fe(III)-[cytochrome c] + H2O = 2 nitric oxide + 2 Fe(II)-[cytochrome c] + 2 H(+). It participates in nitrogen metabolism; nitrate reduction (denitrification); dinitrogen from nitrate: step 3/4. In terms of biological role, component of the anaerobic respiratory chain that transforms nitrate to dinitrogen (denitrification). NorB is the catalytic subunit of the enzyme complex. Shows proton pump activity across the membrane in denitrifying bacterial cells. The mononitrogen reduction is probably coupled to electron transport phosphorylation. The sequence is that of Nitric oxide reductase subunit B (norB) from Pseudomonas aeruginosa (strain ATCC 15692 / DSM 22644 / CIP 104116 / JCM 14847 / LMG 12228 / 1C / PRS 101 / PAO1).